The chain runs to 233 residues: Nickel import system ATP-binding protein NikE (233 aa).

Residues 2–228 enclose the ABC transporter domain; it reads IELKHVTFGY…DRHPYTKELV (227 aa). 35–42 lines the ATP pocket; sequence GESGCGKS.

The protein belongs to the ABC transporter superfamily. The complex is composed of two ATP-binding proteins (NikD and NikE), two transmembrane proteins (NikB and NikC) and a solute-binding protein (NikA).

It is found in the cell membrane. It carries out the reaction Ni(2+)(out) + ATP + H2O = Ni(2+)(in) + ADP + phosphate + H(+). Part of the ABC transporter complex NikABCDE (Opp2) involved in nickel import. Probably responsible for energy coupling to the transport system. The polypeptide is Nickel import system ATP-binding protein NikE (Staphylococcus aureus (strain MSSA476)).